The following is a 335-amino-acid chain: Beta-hexosaminidase (335 aa).

Substrate-binding positions include aspartate 60, arginine 68, arginine 133, and 163–164; that span reads KH. Histidine 176 acts as the Proton donor/acceptor in catalysis. The active-site Nucleophile is the aspartate 247.

This sequence belongs to the glycosyl hydrolase 3 family. NagZ subfamily.

It localises to the cytoplasm. It carries out the reaction Hydrolysis of terminal non-reducing N-acetyl-D-hexosamine residues in N-acetyl-beta-D-hexosaminides.. The protein operates within cell wall biogenesis; peptidoglycan recycling. In terms of biological role, plays a role in peptidoglycan recycling by cleaving the terminal beta-1,4-linked N-acetylglucosamine (GlcNAc) from peptide-linked peptidoglycan fragments, giving rise to free GlcNAc, anhydro-N-acetylmuramic acid and anhydro-N-acetylmuramic acid-linked peptides. The sequence is that of Beta-hexosaminidase from Xylella fastidiosa (strain M23).